A 252-amino-acid polypeptide reads, in one-letter code: Imidazole glycerol phosphate synthase subunit HisF (252 aa).

Residues D11 and D130 contribute to the active site.

The protein belongs to the HisA/HisF family. As to quaternary structure, heterodimer of HisH and HisF.

It localises to the cytoplasm. It carries out the reaction 5-[(5-phospho-1-deoxy-D-ribulos-1-ylimino)methylamino]-1-(5-phospho-beta-D-ribosyl)imidazole-4-carboxamide + L-glutamine = D-erythro-1-(imidazol-4-yl)glycerol 3-phosphate + 5-amino-1-(5-phospho-beta-D-ribosyl)imidazole-4-carboxamide + L-glutamate + H(+). It functions in the pathway amino-acid biosynthesis; L-histidine biosynthesis; L-histidine from 5-phospho-alpha-D-ribose 1-diphosphate: step 5/9. Functionally, IGPS catalyzes the conversion of PRFAR and glutamine to IGP, AICAR and glutamate. The HisF subunit catalyzes the cyclization activity that produces IGP and AICAR from PRFAR using the ammonia provided by the HisH subunit. The polypeptide is Imidazole glycerol phosphate synthase subunit HisF (Citrifermentans bemidjiense (strain ATCC BAA-1014 / DSM 16622 / JCM 12645 / Bem) (Geobacter bemidjiensis)).